The sequence spans 58 residues: Cholecystokinins (58 aa).

Residue Y52 is modified to Sulfotyrosine. F58 is subject to Phenylalanine amide.

The protein belongs to the gastrin/cholecystokinin family. Binds to CCK-A receptors in the pancreas and CCK-B receptors in the brain. cholecystokinin 8 binds CCK-A receptors more potently than cholecystokinin 58, cholecystokinin 8 and cholecystokinin 58 bind CCK-B receptors with equal affinity. The precursor is cleaved by proteases to produce a number of active cholecystokinins. Post-translationally, cholecystokinin 58 occurs in both sulfated (CCK58(s)) and nonsulfated (CCK58(ns)) forms, which differ in their receptor-binding activities. CCK58(s) binds to the CCK-A receptor with high affinity, CCK58(ns) binds poorly to the CCK-A receptor. CCK58(s) and CCK58(ns) both bind the CCK-B receptor. In terms of processing, the precursor is cleaved by ACE, which removes the Gly-Arg-Arg peptide at the C-terminus, leading to mature hormone.

The protein localises to the secreted. In terms of biological role, this peptide hormone induces gall bladder contraction and the release of pancreatic enzymes in the gut. Its function in the brain is not clear. Binding to CCK-A receptors stimulates amylase release from the pancreas, binding to CCK-B receptors stimulates gastric acid secretion. cholecystokinin 58 and cholecystokinin 8, but not cholecystokinin 58 desnonopeptide, stimulate amylase release from the pancreas. cholecystokinin 58, but not cholecystokinin 8, increases bile-pancreatic volume. The chain is Cholecystokinins from Canis lupus familiaris (Dog).